Consider the following 101-residue polypeptide: MAKKSKVARNAQRKALVAKYAKRRAALKARIRDRTLSYEERRAAQDALASLPRDSNPNRVTNRCALTGRPRGNLRRFGLSRIAFREKALRGEIPGVIKSSW.

Residues 47-66 form a disordered region; it reads ALASLPRDSNPNRVTNRCAL.

It belongs to the universal ribosomal protein uS14 family. As to quaternary structure, part of the 30S ribosomal subunit. Contacts proteins S3 and S10.

Functionally, binds 16S rRNA, required for the assembly of 30S particles and may also be responsible for determining the conformation of the 16S rRNA at the A site. In Myxococcus xanthus (strain DK1622), this protein is Small ribosomal subunit protein uS14A.